The primary structure comprises 479 residues: Flap endonuclease 1 (479 aa).

Residues 1-106 are N-domain; that stretch reads MGIKGLTKFI…SELEKRGEKR (106 aa). Asp-34 contacts Mg(2+). Residues Arg-47 and Arg-72 each coordinate DNA. Mg(2+)-binding residues include Asp-88, Glu-160, Glu-162, Asp-181, and Asp-183. The interval 124-266 is I-domain; it reads EIKKQSGRTV…KTAYNLIKEY (143 aa). Residue Glu-160 participates in DNA binding. Gly-244 and Asp-246 together coordinate DNA. Residue Asp-246 coordinates Mg(2+). The interaction with PCNA stretch occupies residues 349 to 357; the sequence is TQRRLDTFF. The disordered stretch occupies residues 379–455; sequence AKGKGKKREL…NSDSGNIKNE (77 aa). The segment covering 403 to 428 has biased composition (basic and acidic residues); the sequence is NIKDEKKNTDKMDELKNKSDENFVKD.

The protein belongs to the XPG/RAD2 endonuclease family. FEN1 subfamily. As to quaternary structure, interacts with PCNA. Three molecules of FEN1 bind to one PCNA trimer with each molecule binding to one PCNA monomer. PCNA stimulates the nuclease activity without altering cleavage specificity. It depends on Mg(2+) as a cofactor. In terms of processing, phosphorylated. Phosphorylation upon DNA damage induces relocalization to the nuclear plasma.

It localises to the nucleus. Its subcellular location is the nucleolus. The protein resides in the nucleoplasm. It is found in the mitochondrion. Its function is as follows. Structure-specific nuclease with 5'-flap endonuclease and 5'-3' exonuclease activities involved in DNA replication and repair. During DNA replication, cleaves the 5'-overhanging flap structure that is generated by displacement synthesis when DNA polymerase encounters the 5'-end of a downstream Okazaki fragment. It enters the flap from the 5'-end and then tracks to cleave the flap base, leaving a nick for ligation. Also involved in the long patch base excision repair (LP-BER) pathway, by cleaving within the apurinic/apyrimidinic (AP) site-terminated flap. Acts as a genome stabilization factor that prevents flaps from equilibrating into structures that lead to duplications and deletions. Also possesses 5'-3' exonuclease activity on nicked or gapped double-stranded DNA, and exhibits RNase H activity. Also involved in replication and repair of rDNA and in repairing mitochondrial DNA. In Plasmodium chabaudi chabaudi, this protein is Flap endonuclease 1.